The primary structure comprises 387 residues: MANGNASSDGPGNPLAAVVSTTGGVMGGAPSSAVSTYVKLVLLGLIICISLVGNLVVSLLVLRDRALHKAPYYFLLDLCLADTIRSAVCFPFVLVSIKNGSAWTYSVLSCKVVAFMAVLFCFHAAFMLFCISVTRYMAIAHHRFYSKRMTFWTCVAVVCMVWTLSVAMAFPPVFDVGTYKFIREEDQCIFEHRYFKANDTLGFMLMLAVLILATHVVYMKLLLFEYKHRKMKPVQMVPAISQNWTFHGPGATGQAAANWIAGFGRGPMPPTLLGIRQNLHNQNRRLLGMEEFKAEKQLGRMFYVITLFFLVLWSPYIVACYWRVFVKACTIPHRYLSTTVWMSFAQAGVNPIICFFLNKDLKKGLLAHLPPCCRTPPQLPREPYCVM.

At 1–40 the chain is on the extracellular side; it reads MANGNASSDGPGNPLAAVVSTTGGVMGGAPSSAVSTYVKL. Asn5 carries an N-linked (GlcNAc...) asparagine glycan. Residues 41–61 form a helical membrane-spanning segment; sequence VLLGLIICISLVGNLVVSLLV. Residues 62–87 lie on the Cytoplasmic side of the membrane; that stretch reads LRDRALHKAPYYFLLDLCLADTIRSA. Residues 88–108 traverse the membrane as a helical segment; it reads VCFPFVLVSIKNGSAWTYSVL. Over 109–111 the chain is Extracellular; it reads SCK. Cys110 and Cys188 are joined by a disulfide. Residues 112 to 132 form a helical membrane-spanning segment; the sequence is VVAFMAVLFCFHAAFMLFCIS. Over 133-153 the chain is Cytoplasmic; sequence VTRYMAIAHHRFYSKRMTFWT. The helical transmembrane segment at 154-174 threads the bilayer; sequence CVAVVCMVWTLSVAMAFPPVF. Topologically, residues 175 to 202 are extracellular; sequence DVGTYKFIREEDQCIFEHRYFKANDTLG. N-linked (GlcNAc...) asparagine glycosylation occurs at Asn198. A helical transmembrane segment spans residues 203–223; it reads FMLMLAVLILATHVVYMKLLL. Residues 224–301 lie on the Cytoplasmic side of the membrane; it reads FEYKHRKMKP…FKAEKQLGRM (78 aa). A helical membrane pass occupies residues 302–322; it reads FYVITLFFLVLWSPYIVACYW. Residues 323 to 335 are Extracellular-facing; sequence RVFVKACTIPHRY. Residues 336 to 356 traverse the membrane as a helical segment; the sequence is LSTTVWMSFAQAGVNPIICFF. Over 357-387 the chain is Cytoplasmic; sequence LNKDLKKGLLAHLPPCCRTPPQLPREPYCVM.

Belongs to the G-protein coupled receptor 1 family.

Its subcellular location is the cell membrane. Its function is as follows. Is a receptor for the SMIM20 derived peptides Phoenixin-14 and Phoenixin-20. It mediates the Phoenixin-14 and Phoenixin-20 augmentation of gonadotropin-releasing hormone (GNRH) signaling in the hypothalamus and pituitary gland. In the ovary, it mediates the effects of Phoenixin-14 and Phoenixin-20 induced granulosa cell proliferation during follicular growth. In Danio rerio (Zebrafish), this protein is Probable G-protein coupled receptor 173 (gpr173).